The primary structure comprises 435 residues: Temperature-sensitive sn-2 acyl-lipid omega-3 desaturase (ferredoxin), chloroplastic (435 aa).

The transit peptide at 1 to 42 (MASSVLSECGFRPLPRFYPKHTTSFASNPKPTFKFNPPLKPP) directs the protein to the chloroplast. 2 consecutive transmembrane segments (helical) span residues 111-131 (MSYVVRDVAIVFGLAAVAAYF) and 134-154 (WLLWPLYWFAQGTMFWALFVL). The Histidine box-1 signature appears at 156 to 160 (HDCGH). Positions 192–196 (HRTHH) match the Histidine box-2 motif. The next 2 membrane-spanning stretches (helical) occupy residues 268 to 290 (VLTSTACWTAMAALLVCLNFVMG) and 297 to 319 (LYGIPYWIFVMWLDFVTYLHHHG). The short motif at 359-363 (HVIHH) is the Histidine box-3 element.

It belongs to the fatty acid desaturase type 1 family.

The protein localises to the plastid. The protein resides in the chloroplast membrane. The enzyme catalyses a (7Z,10Z)-hexadecadienoyl-containing glycerolipid + 2 reduced [2Fe-2S]-[ferredoxin] + O2 + 2 H(+) = a (7Z,10Z,13Z)-hexadecatrienoyl-containing glycerolipid + 2 oxidized [2Fe-2S]-[ferredoxin] + 2 H2O. It catalyses the reaction a (9Z,12Z)-octadecadienoyl-containing glycerolipid + 2 reduced [2Fe-2S]-[ferredoxin] + O2 + 2 H(+) = (9Z,12Z,15Z)-octadecatrienoyl-containing glycerolipid + 2 oxidized [2Fe-2S]-[ferredoxin] + 2 H2O. The protein operates within lipid metabolism; polyunsaturated fatty acid biosynthesis. Chloroplast omega-3 fatty acid desaturase introduces the third double bond in the biosynthesis of 16:3 and 18:3 fatty acids, important constituents of plant membranes. It is thought to use ferredoxin as an electron donor and to act on fatty acids esterified to galactolipids, sulfolipids and phosphatidylglycerol. The protein is Temperature-sensitive sn-2 acyl-lipid omega-3 desaturase (ferredoxin), chloroplastic of Arabidopsis thaliana (Mouse-ear cress).